The following is a 368-amino-acid chain: 1-aminocyclopropane-1-carboxylate oxidase (368 aa).

A Fe2OG dioxygenase domain is found at 177–307 (PFILMGLLHY…RFSIPFFLDP (131 aa)). The segment at 191–226 (HQEQEEEQEDDESNNGGKKSPNPDESKKPEVEKFGT) is disordered. The segment covering 194–203 (QEEEQEDDES) has biased composition (acidic residues). The span at 211-223 (PNPDESKKPEVEK) shows a compositional bias: basic and acidic residues. The Fe cation site is built by histidine 229, aspartate 231, and histidine 287. A 2-oxoglutarate-binding site is contributed by arginine 298.

It belongs to the iron/ascorbate-dependent oxidoreductase family. It depends on Fe(2+) as a cofactor.

The catalysed reaction is 1-aminocyclopropane-1-carboxylate + L-ascorbate + O2 = ethene + L-dehydroascorbate + hydrogen cyanide + CO2 + 2 H2O. It participates in alkene biosynthesis; ethylene biosynthesis via S-adenosyl-L-methionine; ethylene from S-adenosyl-L-methionine: step 2/2. Its function is as follows. Involved in ethylene biosynthesis. Overexpression induces overproduction of ethylene. The chain is 1-aminocyclopropane-1-carboxylate oxidase (aco) from Dictyostelium discoideum (Social amoeba).